A 695-amino-acid polypeptide reads, in one-letter code: Elongation factor G 1 (695 aa).

The 279-residue stretch at 6 to 284 (KKVRNIGISA…VTRYLPCPAD (279 aa)) folds into the tr-type G domain. Residues 15–22 (AHIDSGKT), 82–86 (DTPGH), and 136–139 (NKCD) each bind GTP.

This sequence belongs to the TRAFAC class translation factor GTPase superfamily. Classic translation factor GTPase family. EF-G/EF-2 subfamily.

The protein resides in the cytoplasm. In terms of biological role, catalyzes the GTP-dependent ribosomal translocation step during translation elongation. During this step, the ribosome changes from the pre-translocational (PRE) to the post-translocational (POST) state as the newly formed A-site-bound peptidyl-tRNA and P-site-bound deacylated tRNA move to the P and E sites, respectively. Catalyzes the coordinated movement of the two tRNA molecules, the mRNA and conformational changes in the ribosome. This is Elongation factor G 1 from Syntrophus aciditrophicus (strain SB).